Consider the following 171-residue polypeptide: Lipoprotein signal peptidase (171 aa).

The next 4 helical transmembrane spans lie at 12 to 32 (LAWL…KLYF), 42 to 62 (IVVI…AAFS), 70 to 90 (WQRW…VVWL), and 96 to 116 (NETW…GNLY). Active-site residues include D126 and D145. Residues 137–157 (YFPAFNVADSAITVGAVMLAL) form a helical membrane-spanning segment.

The protein belongs to the peptidase A8 family.

The protein resides in the cell inner membrane. The enzyme catalyses Release of signal peptides from bacterial membrane prolipoproteins. Hydrolyzes -Xaa-Yaa-Zaa-|-(S,diacylglyceryl)Cys-, in which Xaa is hydrophobic (preferably Leu), and Yaa (Ala or Ser) and Zaa (Gly or Ala) have small, neutral side chains.. It participates in protein modification; lipoprotein biosynthesis (signal peptide cleavage). Functionally, this protein specifically catalyzes the removal of signal peptides from prolipoproteins. This Pseudomonas putida (strain ATCC 47054 / DSM 6125 / CFBP 8728 / NCIMB 11950 / KT2440) protein is Lipoprotein signal peptidase.